A 599-amino-acid polypeptide reads, in one-letter code: Elongation factor 4 (599 aa).

The 183-residue stretch at 4–186 (KFIRNFSIIA…AIIKHVPPPL (183 aa)) folds into the tr-type G domain. Residues 16-21 (DHGKST) and 133-136 (NKID) each bind GTP.

It belongs to the TRAFAC class translation factor GTPase superfamily. Classic translation factor GTPase family. LepA subfamily.

It is found in the cell membrane. The enzyme catalyses GTP + H2O = GDP + phosphate + H(+). Required for accurate and efficient protein synthesis under certain stress conditions. May act as a fidelity factor of the translation reaction, by catalyzing a one-codon backward translocation of tRNAs on improperly translocated ribosomes. Back-translocation proceeds from a post-translocation (POST) complex to a pre-translocation (PRE) complex, thus giving elongation factor G a second chance to translocate the tRNAs correctly. Binds to ribosomes in a GTP-dependent manner. This is Elongation factor 4 from Ureaplasma parvum serovar 3 (strain ATCC 27815 / 27 / NCTC 11736).